We begin with the raw amino-acid sequence, 237 residues long: Lipoprotein-releasing system ATP-binding protein LolD (237 aa).

The ABC transporter domain occupies 16–237; that stretch reads LKCEGLTRIY…LDQGRLSEDA (222 aa). Residue 52–59 coordinates ATP; the sequence is GSSGSGKT.

It belongs to the ABC transporter superfamily. Lipoprotein translocase (TC 3.A.1.125) family. In terms of assembly, the complex is composed of two ATP-binding proteins (LolD) and two transmembrane proteins (LolC and LolE).

Its subcellular location is the cell inner membrane. In terms of biological role, part of the ABC transporter complex LolCDE involved in the translocation of mature outer membrane-directed lipoproteins, from the inner membrane to the periplasmic chaperone, LolA. Responsible for the formation of the LolA-lipoprotein complex in an ATP-dependent manner. The chain is Lipoprotein-releasing system ATP-binding protein LolD from Chromohalobacter salexigens (strain ATCC BAA-138 / DSM 3043 / CIP 106854 / NCIMB 13768 / 1H11).